Here is a 205-residue protein sequence, read N- to C-terminus: Enhancer of split mgamma protein (205 aa).

Residues 15-72 (YRKVMKPMLERKRRARINKCLDELKDLMVATLESEGEHVTRLEKADILELTVTHLQKM) form the bHLH domain. In terms of domain architecture, Orange spans 93–126 (FRSGYIHAVNEVSRSLSQLPGMNVSLGTQLMTHL). Positions 202 to 205 (WRPW) match the WRPW motif motif.

As to quaternary structure, homodimer. Heterodimer with dpn. Might form higher-order oligomers. Transcription repression requires formation of a complex with a corepressor protein (Groucho). Expressed in sensory organ precursors in the wing, leg and eye imaginal disk.

It localises to the nucleus. Transcriptional repressor of genes that require a bHLH protein for their transcription. May serve as a transcriptional regulator of the Achaete-scute complex (AS-C) genes. Contributes to the neural-epidermal lineage decision during early neurogenesis. Part of the Notch signaling pathway, plays a role in neuroblasts proliferation in embryos and larvae. In the larval brain, together with other self-renewal transcriptional repressors such as klu and dpn, required for type II neuroblast self-renewal and for maintaining erm in an inactive state in intermediate neural progenitors (INP) derived from type II neuroblasts. This chain is Enhancer of split mgamma protein, found in Drosophila melanogaster (Fruit fly).